Consider the following 302-residue polypeptide: Tyrosine recombinase XerC (302 aa).

Residues Gln2 to Leu89 enclose the Core-binding (CB) domain. Residues Arg110–Asp289 form the Tyr recombinase domain. Residues Arg150, Lys174, His241, Arg244, and His267 contribute to the active site. Residue Tyr276 is the O-(3'-phospho-DNA)-tyrosine intermediate of the active site.

This sequence belongs to the 'phage' integrase family. XerC subfamily. As to quaternary structure, forms a cyclic heterotetrameric complex composed of two molecules of XerC and two molecules of XerD.

The protein localises to the cytoplasm. Its function is as follows. Site-specific tyrosine recombinase, which acts by catalyzing the cutting and rejoining of the recombining DNA molecules. The XerC-XerD complex is essential to convert dimers of the bacterial chromosome into monomers to permit their segregation at cell division. It also contributes to the segregational stability of plasmids. The polypeptide is Tyrosine recombinase XerC (Pelobacter propionicus (strain DSM 2379 / NBRC 103807 / OttBd1)).